Consider the following 758-residue polypeptide: Spastin (758 aa).

The interval 1–103 (MVRTKNQSSS…SPRSGHHHSY (103 aa)) is disordered. Over 1-121 (MVRTKNQSSS…KQNLYVVSFP (121 aa)) the chain is Cytoplasmic. The segment at 1–210 (MVRTKNQSSS…RPIQPLEMAA (210 aa)) is required for localization to punctate cytoplasmic foci. 4 stretches are compositionally biased toward low complexity: residues 8 to 28 (SSSS…SSGA), 43 to 58 (RSSS…AGGS), 66 to 76 (SSNRRSPGSSP), and 85 to 95 (TDDLTPTTCSP). The segment at residues 122–142 (IIFLFNVLRSLIYQLFCIFRY) is an intramembrane region (helical). The Cytoplasmic segment spans residues 143 to 758 (LYGASTKVIY…WSQDYGDITI (616 aa)). 2 stretches are compositionally biased toward polar residues: residues 169–180 (SKEQQQSLNHPS) and 189–198 (QEQQLSNQPQ). The interval 169–202 (SKEQQQSLNHPSELNREGDGQEQQLSNQPQRFRP) is disordered. Residues 208–758 (MAANRPGGGY…WSQDYGDITI (551 aa)) form a sufficient for interaction with microtubules and microtubule severing region. An MIT domain is found at 233-308 (HRRAFEYISK…SMARDRLHFL (76 aa)). Positions 353 to 454 (RVRSSGYGPK…GPSGSGASTP (102 aa)) are disordered. Polar residues-rich tracts occupy residues 390–406 (NKSQ…TSVG) and 425–454 (QFSS…ASTP). Residues 443–455 (NNGPSGSGASTPV) form a required for interaction with microtubules region. 523–530 (GPPGNGKT) contributes to the ATP binding site.

It belongs to the AAA ATPase family. Spastin subfamily. Homohexamer. The homohexamer is stabilized by ATP-binding. The homohexamer may adopt a ring conformation through which microtubules pass prior to being severed. Interacts with microtubules. Interacts with atl; may be involved in microtubule dynamics.

The protein localises to the membrane. It is found in the cytoplasm. Its subcellular location is the cytoskeleton. It localises to the microtubule organizing center. The protein resides in the centrosome. The protein localises to the chromosome. It is found in the lipid droplet. The enzyme catalyses n ATP + n H2O + a microtubule = n ADP + n phosphate + (n+1) alpha/beta tubulin heterodimers.. Functionally, ATP-dependent microtubule severing protein. Stimulates microtubule minus-end depolymerization and poleward microtubule flux in the mitotic spindle. Regulates microtubule stability in the neuromuscular junction synapse. Involved in lipid metabolism by regulating the size and distribution of lipid droplets. Involved in axon regeneration by regulating microtubule severing. The protein is Spastin of Drosophila sechellia (Fruit fly).